Reading from the N-terminus, the 81-residue chain is Delta-conotoxin-like Ac6.3 (81 aa).

Residues 1-22 (MKLTCVMIVAVLFLTAWTFVTA) form the signal peptide. A propeptide spanning residues 23-51 (DDSRNGLENLSPKARHEMKNPEASKSNKR) is cleaved from the precursor. Disulfide bonds link cysteine 54/cysteine 69, cysteine 61/cysteine 73, and cysteine 68/cysteine 78.

The protein belongs to the conotoxin O1 superfamily. As to expression, expressed by the venom duct.

Its subcellular location is the secreted. In terms of biological role, delta-conotoxins bind to site 6 of voltage-gated sodium channels (Nav) and inhibit the inactivation process. In Conus achatinus (Little frog cone), this protein is Delta-conotoxin-like Ac6.3.